We begin with the raw amino-acid sequence, 536 residues long: Lysosomal acid glucosylceramidase (536 aa).

The signal sequence occupies residues 1–39; that stretch reads MEFSSPSREECPKPSGRVSIMAGSLTGLLLLQAVSWASG. 2 disulfides stabilise this stretch: cysteine 43–cysteine 55 and cysteine 57–cysteine 62. N-linked (GlcNAc...) asparagine glycans are attached at residues asparagine 58, asparagine 98, and asparagine 185. Glutamate 274 (proton donor) is an active-site residue. N-linked (GlcNAc...) asparagine glycosylation is present at asparagine 309. Glutamate 379 (nucleophile) is an active-site residue. N-linked (GlcNAc...) asparagine glycosylation occurs at asparagine 501.

Belongs to the glycosyl hydrolase 30 family. In terms of assembly, interacts with saposin-C. Interacts with SCARB2. Interacts with TCP1. Interacts with GRN; this interaction prevents aggregation of GBA1-SCARB2 complex via interaction with HSPA1A upon stress.

It is found in the lysosome membrane. It carries out the reaction a beta-D-glucosyl-(1&lt;-&gt;1')-N-acylsphing-4-enine + H2O = an N-acylsphing-4-enine + D-glucose. The catalysed reaction is a beta-D-galactosyl-(1&lt;-&gt;1')-N-acylsphing-4-enine + H2O = an N-acylsphing-4-enine + D-galactose. It catalyses the reaction cholesteryl 3-beta-D-glucoside + H2O = cholesterol + D-glucose. The enzyme catalyses a beta-D-glucosyl-(1&lt;-&gt;1')-N-acylsphing-4-enine + cholesterol = cholesteryl 3-beta-D-glucoside + an N-acylsphing-4-enine. It carries out the reaction beta-D-glucosyl-N-(9Z-octadecenoyl)-sphing-4E-enine + cholesterol = N-(9Z-octadecenoyl)-sphing-4-enine + cholesteryl 3-beta-D-glucoside. The catalysed reaction is beta-D-glucosyl-N-octanoylsphing-4E-enine + cholesterol = N-octanoylsphing-4-enine + cholesteryl 3-beta-D-glucoside. It catalyses the reaction beta-D-glucosyl-N-dodecanoylsphing-4-enine + cholesterol = N-dodecanoylsphing-4-enine + cholesteryl 3-beta-D-glucoside. The enzyme catalyses beta-D-glucosyl-(1&lt;-&gt;1)-N-octadecanoylsphing-4-enine + cholesterol = N-octadecanoylsphing-4-enine + cholesteryl 3-beta-D-glucoside. It carries out the reaction beta-D-glucosyl-(1&lt;-&gt;1')-N-(15Z-tetracosenoyl)-sphing-4-enine + cholesterol = N-(15Z-tetracosenoyl)-sphing-4-enine + cholesteryl 3-beta-D-glucoside. The catalysed reaction is a beta-D-galactosyl-(1&lt;-&gt;1')-N-acylsphing-4-enine + cholesterol = cholesteryl 3-beta-D-galactoside + an N-acylsphing-4-enine. It catalyses the reaction 1-(beta-D-galactosyl)-N-dodecanoylsphing-4-enine + cholesterol = cholesteryl 3-beta-D-galactoside + N-dodecanoylsphing-4-enine. The enzyme catalyses a beta-D-xylosyl-(1&lt;-&gt;1')-N-acylsphing-4-enine + cholesterol = cholesteryl 3-beta-D-xyloside + an N-acylsphing-4-enine. It carries out the reaction beta-D-xylosyl-(1&lt;-&gt;1')-N-(9Z-octadecenoyl)-sphing-4-enine + cholesterol = cholesteryl 3-beta-D-xyloside + N-(9Z-octadecenoyl)-sphing-4-enine. The protein operates within steroid metabolism; cholesterol metabolism. Its pathway is sphingolipid metabolism. Its function is as follows. Glucosylceramidase that catalyzes, within the lysosomal compartment, the hydrolysis of glucosylceramides/GlcCers (such as beta-D-glucosyl-(1&lt;-&gt;1')-N-acylsphing-4-enine) into free ceramides (such as N-acylsphing-4-enine) and glucose. Plays a central role in the degradation of complex lipids and the turnover of cellular membranes. Through the production of ceramides, participates in the PKC-activated salvage pathway of ceramide formation. Catalyzes the glucosylation of cholesterol, through a transglucosylation reaction where glucose is transferred from GlcCer to cholesterol. GlcCer containing mono-unsaturated fatty acids (such as beta-D-glucosyl-N-(9Z-octadecenoyl)-sphing-4-enine) are preferred as glucose donors for cholesterol glucosylation when compared with GlcCer containing same chain length of saturated fatty acids (such as beta-D-glucosyl-N-octadecanoyl-sphing-4-enine). Under specific conditions, may alternatively catalyze the reverse reaction, transferring glucose from cholesteryl 3-beta-D-glucoside to ceramide. Can also hydrolyze cholesteryl 3-beta-D-glucoside producing glucose and cholesterol. Catalyzes the hydrolysis of galactosylceramides/GalCers (such as beta-D-galactosyl-(1&lt;-&gt;1')-N-acylsphing-4-enine), as well as the transfer of galactose between GalCers and cholesterol in vitro, but with lower activity than with GlcCers. Contrary to GlcCer and GalCer, xylosylceramide/XylCer (such as beta-D-xyosyl-(1&lt;-&gt;1')-N-acylsphing-4-enine) is not a good substrate for hydrolysis, however it is a good xylose donor for transxylosylation activity to form cholesteryl 3-beta-D-xyloside. This Pan troglodytes (Chimpanzee) protein is Lysosomal acid glucosylceramidase (GBA1).